Here is a 301-residue protein sequence, read N- to C-terminus: Putative hydro-lyase C5H10.01 (301 aa).

It belongs to the D-glutamate cyclase family.

The chain is Putative hydro-lyase C5H10.01 from Schizosaccharomyces pombe (strain 972 / ATCC 24843) (Fission yeast).